Consider the following 244-residue polypeptide: Myrosinase MB1 (244 aa).

Residue N32 is glycosylated (N-linked (GlcNAc...) asparagine). Y51 contributes to the substrate binding site. E125 functions as the Nucleophile in the catalytic mechanism. Residues W173 and E180–F181 each bind substrate. N216 carries an N-linked (GlcNAc...) asparagine glycan.

This sequence belongs to the glycosyl hydrolase 1 family. As to quaternary structure, homodimer. In vacuoles called myrosin grains of a certain class of cells, myrosin cells, distributed in the cotyledons and the axis of the embryo as well as in different organs of the growing plant.

The protein resides in the vacuole. It carries out the reaction a thioglucoside + H2O = a sugar + a thiol.. Functionally, degradation of glucosinolates (glucose residue linked by a thioglucoside bound to an amino acid derivative) to glucose, sulfate and any of the products: thiocyanates, isothiocyanates, nitriles, epithionitriles or oxazolidine-2-thiones. The sequence is that of Myrosinase MB1 from Sinapis alba (White mustard).